The sequence spans 400 residues: Riboflavin biosynthesis protein RibBA (400 aa).

The DHBP synthase stretch occupies residues methionine 1–arginine 202. D-ribulose 5-phosphate is bound by residues arginine 28–glutamate 29, aspartate 33, arginine 141–threonine 145, and glutamate 165. Mg(2+) is bound at residue glutamate 29. Histidine 144 is a binding site for Mg(2+). Residues threonine 203–glycine 400 form a GTP cyclohydrolase II region. GTP is bound at residue arginine 253–glutamate 257. Zn(2+)-binding residues include cysteine 258, cysteine 269, and cysteine 271. GTP-binding positions include glutamine 274, glutamate 297–arginine 299, and threonine 319. Aspartate 331 serves as the catalytic Proton acceptor; for GTP cyclohydrolase activity. Catalysis depends on arginine 333, which acts as the Nucleophile; for GTP cyclohydrolase activity. GTP contacts are provided by threonine 354 and lysine 359.

The protein in the N-terminal section; belongs to the DHBP synthase family. In the C-terminal section; belongs to the GTP cyclohydrolase II family. The cofactor is Mg(2+). Mn(2+) is required as a cofactor. Requires Zn(2+) as cofactor.

It carries out the reaction D-ribulose 5-phosphate = (2S)-2-hydroxy-3-oxobutyl phosphate + formate + H(+). It catalyses the reaction GTP + 4 H2O = 2,5-diamino-6-hydroxy-4-(5-phosphoribosylamino)-pyrimidine + formate + 2 phosphate + 3 H(+). It functions in the pathway cofactor biosynthesis; riboflavin biosynthesis; 2-hydroxy-3-oxobutyl phosphate from D-ribulose 5-phosphate: step 1/1. The protein operates within cofactor biosynthesis; riboflavin biosynthesis; 5-amino-6-(D-ribitylamino)uracil from GTP: step 1/4. Functionally, catalyzes the conversion of D-ribulose 5-phosphate to formate and 3,4-dihydroxy-2-butanone 4-phosphate. Catalyzes the conversion of GTP to 2,5-diamino-6-ribosylamino-4(3H)-pyrimidinone 5'-phosphate (DARP), formate and pyrophosphate. The protein is Riboflavin biosynthesis protein RibBA of Salinispora tropica (strain ATCC BAA-916 / DSM 44818 / JCM 13857 / NBRC 105044 / CNB-440).